A 539-amino-acid chain; its full sequence is Alpha-aminoadipic semialdehyde dehydrogenase (539 aa).

The N-terminal 26 residues, 1-26 (MWRVPGLLCVRVARKSKFSGSWNRPA), are a transit peptide targeting the mitochondrion. The residue at position 94 (Lys-94) is an N6-acetyllysine; alternate. N6-succinyllysine; alternate is present on Lys-94. NAD(+) contacts are provided by residues 192–194 (TAF), Lys-218, 258–259 (GT), 274–275 (GS), 274–279 (GSTQVG), and 296–297 (EL). The active-site Proton acceptor is Glu-296. Cys-330 functions as the Nucleophile in the catalytic mechanism. Thr-331 contributes to the (S)-2-amino-6-oxohexanoate binding site. Glu-427 serves as a coordination point for NAD(+). Lys-462 carries the post-translational modification N6-acetyllysine. (S)-2-amino-6-oxohexanoate-binding residues include Gly-489 and Ala-490. Lys-500 is subject to N6-acetyllysine. Lys-537 is modified (N6-succinyllysine).

This sequence belongs to the aldehyde dehydrogenase family. In terms of assembly, homotetramer.

Its subcellular location is the cytoplasm. The protein resides in the cytosol. The protein localises to the nucleus. It is found in the mitochondrion. The catalysed reaction is nonanal + NAD(+) + H2O = nonanoate + NADH + 2 H(+). The enzyme catalyses (S)-2-amino-6-oxohexanoate + NAD(+) + H2O = L-2-aminoadipate + NADH + 2 H(+). It carries out the reaction betaine aldehyde + NAD(+) + H2O = glycine betaine + NADH + 2 H(+). It catalyses the reaction an aldehyde + NAD(+) + H2O = a carboxylate + NADH + 2 H(+). The catalysed reaction is hexanal + NAD(+) + H2O = hexanoate + NADH + 2 H(+). The enzyme catalyses octanal + NAD(+) + H2O = octanoate + NADH + 2 H(+). It carries out the reaction (E)-non-2-enal + NAD(+) + H2O = (E)-non-2-enoate + NADH + 2 H(+). It catalyses the reaction (E)-4-hydroxynon-2-enal + NAD(+) + H2O = (E)-4-hydroxynon-2-enoate + NADH + 2 H(+). Its pathway is amine and polyamine biosynthesis; betaine biosynthesis via choline pathway; betaine from betaine aldehyde: step 1/1. In terms of biological role, multifunctional enzyme mediating important protective effects. Metabolizes betaine aldehyde to betaine, an important cellular osmolyte and methyl donor. Protects cells from oxidative stress by metabolizing a number of lipid peroxidation-derived aldehydes. Involved in lysine catabolism. This chain is Alpha-aminoadipic semialdehyde dehydrogenase (ALDH7A1), found in Bos taurus (Bovine).